The chain runs to 96 residues: Pollen allergen Dac g 3 (96 aa).

The Expansin-like CBD domain maps to 14-94; sequence KKLVLDIKYT…AFKIGTTYTP (81 aa).

This sequence belongs to the expansin family. Expansin B subfamily.

It localises to the secreted. The chain is Pollen allergen Dac g 3 from Dactylis glomerata (Orchard grass).